A 329-amino-acid chain; its full sequence is N-acetylmuramoyl-L-alanine amidase sle1 (329 aa).

Residues 1–26 (MNKKILATAVLGTGALSTLFAHQAEA) form the signal peptide. 3 LysM domains span residues 28–71 (TTHT…VLKV), 88–131 (STYT…QLKV), and 152–195 (STYT…KLRV). The Peptidase C51 domain maps to 205 to 329 (STRSAQSTYY…YQVRNYKFIH (125 aa)).

The protein localises to the secreted. The protein resides in the cell surface. It catalyses the reaction Hydrolyzes the link between N-acetylmuramoyl residues and L-amino acid residues in certain cell-wall glycopeptides.. Its function is as follows. Peptidoglycan hydrolase involved in the splitting of the septum during cell division. This is N-acetylmuramoyl-L-alanine amidase sle1 (sle1) from Staphylococcus haemolyticus (strain JCSC1435).